The following is a 630-amino-acid chain: Probable potassium transport system protein Kup (630 aa).

The next 12 helical transmembrane spans lie at 17–37, 51–71, 105–125, 144–164, 175–195, 218–238, 255–275, 283–303, 344–364, 374–394, 402–422, and 428–448; these read LAIA…LYSL, PSAI…VVGI, ITGL…GDAV, PQLS…LFWI, LFGP…VYHI, VLLA…AEAL, YVLV…LLLL, PFFL…STVA, IYVP…VIGF, YGIA…VVMV, LLVA…FGAN, and QGGW…MTWY.

This sequence belongs to the HAK/KUP transporter (TC 2.A.72) family.

The protein localises to the cell inner membrane. The catalysed reaction is K(+)(in) + H(+)(in) = K(+)(out) + H(+)(out). In terms of biological role, transport of potassium into the cell. Likely operates as a K(+):H(+) symporter. In Burkholderia thailandensis (strain ATCC 700388 / DSM 13276 / CCUG 48851 / CIP 106301 / E264), this protein is Probable potassium transport system protein Kup.